The primary structure comprises 91 residues: uncharacterized protein (91 aa).

Residues 1 to 21 (MKIISKMLVGALALAVTNVYA) form the signal peptide.

This sequence belongs to the BhsA/McbA family.

It is found in the periplasm. This is an uncharacterized protein from Escherichia coli (strain K12).